Here is a 380-residue protein sequence, read N- to C-terminus: Succinyl-diaminopimelate desuccinylase (380 aa).

Zn(2+) is bound at residue H69. The active site involves D71. D102 is a binding site for Zn(2+). E135 serves as the catalytic Proton acceptor. Zn(2+) contacts are provided by E136, E164, and H353.

The protein belongs to the peptidase M20A family. DapE subfamily. As to quaternary structure, homodimer. Zn(2+) serves as cofactor. It depends on Co(2+) as a cofactor.

It catalyses the reaction N-succinyl-(2S,6S)-2,6-diaminopimelate + H2O = (2S,6S)-2,6-diaminopimelate + succinate. It participates in amino-acid biosynthesis; L-lysine biosynthesis via DAP pathway; LL-2,6-diaminopimelate from (S)-tetrahydrodipicolinate (succinylase route): step 3/3. Catalyzes the hydrolysis of N-succinyl-L,L-diaminopimelic acid (SDAP), forming succinate and LL-2,6-diaminopimelate (DAP), an intermediate involved in the bacterial biosynthesis of lysine and meso-diaminopimelic acid, an essential component of bacterial cell walls. This chain is Succinyl-diaminopimelate desuccinylase, found in Cereibacter sphaeroides (strain ATCC 17029 / ATH 2.4.9) (Rhodobacter sphaeroides).